Consider the following 402-residue polypeptide: Choline dehydrogenase (402 aa).

The protein belongs to the iron-containing alcohol dehydrogenase family.

The enzyme catalyses choline + NAD(+) = betaine aldehyde + NADH + H(+). It functions in the pathway amine and polyamine biosynthesis; betaine biosynthesis via choline pathway; betaine aldehyde from choline (dehydrogenase route): step 1/1. Its function is as follows. Involved in the biosynthesis of the osmoprotectant glycine betaine from choline. The sequence is that of Choline dehydrogenase from Bacillus subtilis (strain 168).